Consider the following 464-residue polypeptide: mRNA capping enzyme LEF-4 (464 aa).

Residues 1-204 are mRNA triphosphatase; that stretch reads MDYGDFVIEK…NVMCNIIADM (204 aa). The mRNA guanylyltransferase stretch occupies residues 205–464; sequence EALTDAQNIS…KHRRDRIVPN (260 aa). Lys255 serves as the catalytic N6-GMP-lysine intermediate.

It belongs to the baculoviridae LEF-4 family. In terms of assembly, interacts with LEF-8, LEF-9, and p47.

The protein localises to the host cytoplasm. The protein resides in the host nucleus. The enzyme catalyses a 5'-end diphospho-ribonucleoside in mRNA + GTP + H(+) = a 5'-end (5'-triphosphoguanosine)-ribonucleoside in mRNA + diphosphate. It carries out the reaction a 5'-end triphospho-ribonucleoside in mRNA + H2O = a 5'-end diphospho-ribonucleoside in mRNA + phosphate + H(+). Component of the viral DNA-dependent RNA polymerase that catalyzes two reactions involved in viral RNA cap formation: an RNA 5'-triphosphatase that hydrolyzes the gamma phosphate of triphosphate-terminated RNA and a guanylyltransferase that reacts with GTP to form a covalent protein-guanylate adduct. Therefore plays an essential role in late and very late gene expression. This chain is mRNA capping enzyme LEF-4 (LEF-4), found in Autographa californica nuclear polyhedrosis virus (AcMNPV).